Reading from the N-terminus, the 100-residue chain is Urease subunit gamma (100 aa).

It belongs to the urease gamma subunit family. As to quaternary structure, heterotrimer of UreA (gamma), UreB (beta) and UreC (alpha) subunits. Three heterotrimers associate to form the active enzyme.

Its subcellular location is the cytoplasm. The enzyme catalyses urea + 2 H2O + H(+) = hydrogencarbonate + 2 NH4(+). It functions in the pathway nitrogen metabolism; urea degradation; CO(2) and NH(3) from urea (urease route): step 1/1. The chain is Urease subunit gamma from Frankia alni (strain DSM 45986 / CECT 9034 / ACN14a).